We begin with the raw amino-acid sequence, 706 residues long: Choline transporter-like protein 2 (706 aa).

Residues 1-33 (MGKEQQLYYGKHGTPQKYDPAFRGPIYNRGCTD) are Cytoplasmic-facing. T14 carries the post-translational modification Phosphothreonine. Residues 34–54 (IICCVFLFLAIVGYVAVGIIA) form a helical membrane-spanning segment. The Extracellular segment spans residues 55–232 (WTHGDPRKVI…RIFEDYTVSW (178 aa)). N-linked (GlcNAc...) asparagine glycans are attached at residues N187 and N200. A helical membrane pass occupies residues 233–253 (YWIIIGLIIAMVLSLLFIILL). Over 254–256 (RFL) the chain is Cytoplasmic. The helical transmembrane segment at 257–277 (AGIMVWVMIVMVILVLGYGIL) threads the bilayer. Residues 278 to 315 (HCYMEYARLRGEAGSDVSLVDLGFQTDFRVYLHLRQTW) lie on the Extracellular side of the membrane. Residues 316-336 (VAFMIILSIVEVIIILLLIFL) traverse the membrane as a helical segment. The Cytoplasmic portion of the chain corresponds to 337 to 364 (RKRILIAIALIKEASRAVGYVMCSLLYP). The chain crosses the membrane as a helical span at residues 365 to 385 (LVTFFLLCLCIAYWASTAIFL). The Extracellular portion of the chain corresponds to 386 to 457 (STSNEAVYKI…FNVFMFFWLA (72 aa)). N397 and N417 each carry an N-linked (GlcNAc...) asparagine glycan. A helical membrane pass occupies residues 458–480 (NFVLALGQVTLAGAFASYYWAMN). Residues 481-504 (KPDDLPAFPLFSAFGRALRYHTGS) lie on the Cytoplasmic side of the membrane. A helical transmembrane segment spans residues 505-525 (LAFGSLLLAIVQVIRVILEYL). The Extracellular segment spans residues 526–563 (DQRLKAAENKFAKFLMSCLKCCFWCLEKFIKFLNRNAY). A helical transmembrane segment spans residues 564 to 584 (IMIAIYGTNFCTSARNAFFLL). Residues 585–599 (MRNIIRVAVLDKVTD) are Cytoplasmic-facing. Residues 600-620 (FLFLLGKLLIVGSVGILAFFF) form a helical membrane-spanning segment. Over 621 to 638 (FTHRIRIVQDTAPSLNYY) the chain is Extracellular. Residues 639–659 (WVPVVTVVIGSYLIAHGFFSV) traverse the membrane as a helical segment. The Cytoplasmic portion of the chain corresponds to 660 to 706 (YGMCVDTLFLCFLEDLERNDGTPERPYFMSLTLKKILNKTNKRQAEA).

It belongs to the CTL (choline transporter-like) family. Interacts with COCH. N-glycosylated.

The protein resides in the cell membrane. Its subcellular location is the mitochondrion outer membrane. The enzyme catalyses choline(out) + n H(+)(in) = choline(in) + n H(+)(out). It carries out the reaction ethanolamine(out) + n H(+)(in) = ethanolamine(in) + n H(+)(out). Choline/H+ antiporter, mainly in mitochodria. Also acts as a low-affinity ethanolamine/H+ antiporter, regulating the supply of extracellular ethanolamine (Etn) for the CDP-Etn pathway, redistribute intracellular Etn and balance the CDP-Cho and CDP-Etn arms of the Kennedy pathway. This Bos taurus (Bovine) protein is Choline transporter-like protein 2 (SLC44A2).